The primary structure comprises 98 residues: ESAT-6-like protein EsxM (98 aa).

It belongs to the WXG100 family. CFP-10 subfamily.

The protein localises to the secreted. The protein is ESAT-6-like protein EsxM (esxM) of Mycobacterium bovis (strain ATCC BAA-935 / AF2122/97).